We begin with the raw amino-acid sequence, 180 residues long: Adenine phosphoribosyltransferase (180 aa).

Residue Ala-2 is modified to N-acetylalanine. A phosphoserine mark is found at Ser-15 and Ser-30. Tyr-60 carries the post-translational modification Phosphotyrosine. Ser-66 carries the phosphoserine modification. Lys-114 bears the N6-acetyllysine mark. At Thr-135 the chain carries Phosphothreonine.

Belongs to the purine/pyrimidine phosphoribosyltransferase family. Homodimer.

It localises to the cytoplasm. The enzyme catalyses AMP + diphosphate = 5-phospho-alpha-D-ribose 1-diphosphate + adenine. Its pathway is purine metabolism; AMP biosynthesis via salvage pathway; AMP from adenine: step 1/1. Catalyzes a salvage reaction resulting in the formation of AMP, that is energically less costly than de novo synthesis. This Dipodillus campestris (North African gerbil) protein is Adenine phosphoribosyltransferase.